The primary structure comprises 1827 residues: Sucrase-isomaltase, intestinal (1827 aa).

The Cytoplasmic portion of the chain corresponds to Ala-2 to Ser-12. Ser-7 is modified (phosphoserine; by PKA). A helical; Signal-anchor for type II membrane protein transmembrane segment spans residues Leu-13 to Ala-32. The Lumenal portion of the chain corresponds to Thr-33–Ser-1827. A disordered region spans residues Glu-40–Gly-61. A compositionally biased stretch (low complexity) spans Thr-45–Thr-55. Residues Gly-61 to Asp-110 enclose the P-type 1 domain. 3 disulfide bridges follow: Cys-63–Cys-94, Cys-77–Cys-93, and Cys-88–Cys-106. An N-linked (GlcNAc...) asparagine glycan is attached at Asn-99. Positions Asp-110 to Arg-1007 are isomaltase. Residues Tyr-237 and Tyr-239 each carry the sulfotyrosine modification. Residues Asp-264 and Asp-388 each contribute to the substrate site. Sulfotyrosine occurs at positions 391 and 400. 2 N-linked (GlcNAc...) asparagine glycosylation sites follow: Asn-437 and Asn-455. The active-site Nucleophile; for isomaltase activity is the Asp-505. The cysteines at positions 520 and 545 are disulfide-linked. Arg-588 is a binding site for substrate. Residue Asp-604 is the For isomaltase activity of the active site. Cys-635 and Cys-646 form a disulfide bridge. His-662 lines the substrate pocket. Sulfotyrosine is present on residues Tyr-667, Tyr-763, and Tyr-765. N-linked (GlcNAc...) asparagine glycosylation is found at Asn-823, Asn-855, Asn-904, and Asn-926. Residues Asn-932–Arg-978 enclose the P-type 2 domain. A sucrase region spans residues Ile-1008–Ser-1827. N-linked (GlcNAc...) asparagine glycans are attached at residues Asn-1235, Asn-1303, Asn-1340, and Asn-1354. Catalysis depends on Asp-1394, which acts as the Nucleophile; for sucrase activity. Glu-1397 serves as the catalytic For sucrase activity. The N-linked (GlcNAc...) asparagine glycan is linked to Asn-1403. Asp-1500 functions as the Proton donor; for isomaltase activity in the catalytic mechanism. Residues Asn-1535, Asn-1572, Asn-1675, Asn-1748, Asn-1763, and Asn-1815 are each glycosylated (N-linked (GlcNAc...) asparagine).

This sequence belongs to the glycosyl hydrolase 31 family. As to quaternary structure, the resulting sucrase and isomaltase subunits stay associated with one another in a complex by non-covalent linkages. In terms of processing, the precursor is proteolytically cleaved when exposed to pancreatic proteases in the intestinal lumen. Post-translationally, sulfated. In terms of tissue distribution, expressed in the poorly differentiated crypt cells of the small intestine as well as in the mature villous cells. Expressed at very low levels in the colon.

The protein localises to the apical cell membrane. The catalysed reaction is Hydrolysis of sucrose and maltose by an alpha-D-glucosidase-type action.. It catalyses the reaction Hydrolysis of (1-&gt;6)-alpha-D-glucosidic linkages in some oligosaccharides produced from starch and glycogen by alpha-amylase, and in isomaltose.. Its function is as follows. Plays an important role in the final stage of carbohydrate digestion. Isomaltase activity is specific for both alpha-1,4- and alpha-1,6-oligosaccharides. The protein is Sucrase-isomaltase, intestinal (SI) of Homo sapiens (Human).